The chain runs to 303 residues: Porphobilinogen deaminase (303 aa).

S-(dipyrrolylmethanemethyl)cysteine is present on C241.

It belongs to the HMBS family. Monomer. Dipyrromethane is required as a cofactor.

The catalysed reaction is 4 porphobilinogen + H2O = hydroxymethylbilane + 4 NH4(+). Its pathway is porphyrin-containing compound metabolism; protoporphyrin-IX biosynthesis; coproporphyrinogen-III from 5-aminolevulinate: step 2/4. The protein operates within porphyrin-containing compound metabolism; chlorophyll biosynthesis. Tetrapolymerization of the monopyrrole PBG into the hydroxymethylbilane pre-uroporphyrinogen in several discrete steps. In Roseiflexus castenholzii (strain DSM 13941 / HLO8), this protein is Porphobilinogen deaminase.